The following is a 221-amino-acid chain: ASINYTYIIYVIGVITILYASFSTLRTIDIKELIAYSSVSHAAVYLIGAFSNTIQGIEGSIALGLAHGFVSSGLFICAGGILYDRSSTRLITYYRGMAQIMPIFSVLFFILALGNSGTPLTLNFIGEFMSLYGVFERMPILGVLASTSIVFSAAYTIFMYNRIVFGGSYSIYFRENIGDVTRREFIMLLVFVILTVLFGIYPAPILDGLHYSVSYLIYNIN.

The next 6 membrane-spanning stretches (helical) occupy residues 5 to 25 (YTYI…FSTL), 34 to 54 (IAYS…SNTI), 61 to 81 (IALG…AGGI), 100 to 120 (IMPI…GTPL), 140 to 160 (ILGV…IFMY), and 185 to 205 (FIML…PAPI).

Belongs to the complex I subunit 4 family.

It localises to the mitochondrion membrane. It catalyses the reaction a ubiquinone + NADH + 5 H(+)(in) = a ubiquinol + NAD(+) + 4 H(+)(out). Its function is as follows. Core subunit of the mitochondrial membrane respiratory chain NADH dehydrogenase (Complex I) that is believed to belong to the minimal assembly required for catalysis. Complex I functions in the transfer of electrons from NADH to the respiratory chain. The immediate electron acceptor for the enzyme is believed to be ubiquinone. In Emericella nidulans (Aspergillus nidulans), this protein is NADH-ubiquinone oxidoreductase chain 4 (nd4).